Consider the following 219-residue polypeptide: Poxin (219 aa).

H17 functions as the Proton donor in the catalytic mechanism. Y138 serves as the catalytic Shared with catalytic histidine of dimeric partner. K142 functions as the Proton acceptor; shared with catalytic histidine of dimeric partner in the catalytic mechanism.

This sequence belongs to the poxin family. As to quaternary structure, homodimer.

The catalysed reaction is 2',3'-cGAMP + H2O = Gp(2'-5')Ap(3') + H(+). Nuclease that is responsible for viral evasion of host cGAS-STING innate immunity. Cleaves 2',3'-cGAMP which is produced by host cGAS following recognition of cytosolic DNA and blocks the subsequent 2',3'-cGAMP-mediated activation of TMEM173/STING, which normally spreads to adjacent cells and activates the interferon and NF-kappa-B immune responses. The protein is Poxin (OPG188) of Homo sapiens (Human).